The chain runs to 1009 residues: Type VII secretion system accessory factor EsaA (1009 aa).

6 helical membrane passes run isoleucine 7–valine 27, isoleucine 822–phenylalanine 842, alanine 869–isoleucine 889, lysine 903–leucine 923, serine 928–leucine 948, and isoleucine 979–phenylalanine 999.

Belongs to the EsaA family. Homodimer. Interacts with EssB.

Its subcellular location is the cell membrane. In terms of biological role, component of the type VII secretion system (Ess). Provides together with EssB and other components such as EssC and EssE a secretion platform across the cytoplasmic membrane in the host. In Staphylococcus aureus (strain MRSA252), this protein is Type VII secretion system accessory factor EsaA.